The sequence spans 211 residues: tRNA (guanine-N(7)-)-methyltransferase (211 aa).

4 residues coordinate S-adenosyl-L-methionine: Glu-37, Asp-62, Glu-89, and Asp-112. Residue Asp-112 is part of the active site. Positions 116 and 148 each coordinate substrate.

The protein belongs to the class I-like SAM-binding methyltransferase superfamily. TrmB family.

It catalyses the reaction guanosine(46) in tRNA + S-adenosyl-L-methionine = N(7)-methylguanosine(46) in tRNA + S-adenosyl-L-homocysteine. It participates in tRNA modification; N(7)-methylguanine-tRNA biosynthesis. Catalyzes the formation of N(7)-methylguanine at position 46 (m7G46) in tRNA. The protein is tRNA (guanine-N(7)-)-methyltransferase of Geobacter metallireducens (strain ATCC 53774 / DSM 7210 / GS-15).